The chain runs to 222 residues: Small ribosomal subunit protein uS3 (222 aa).

Residues 39–108 form the KH type-2 domain; sequence IRKFIKKELF…NVLINIVEVK (70 aa).

Belongs to the universal ribosomal protein uS3 family. Part of the 30S ribosomal subunit. Forms a tight complex with proteins S10 and S14.

In terms of biological role, binds the lower part of the 30S subunit head. Binds mRNA in the 70S ribosome, positioning it for translation. The chain is Small ribosomal subunit protein uS3 from Clostridium perfringens (strain ATCC 13124 / DSM 756 / JCM 1290 / NCIMB 6125 / NCTC 8237 / Type A).